The primary structure comprises 319 residues: Beta-ketoacyl-[acyl-carrier-protein] synthase III (319 aa).

Residues Cys-113 and His-246 contribute to the active site. Residues 247–251 (QANIR) are ACP-binding. Asn-276 is an active-site residue.

Belongs to the thiolase-like superfamily. FabH family. Homodimer.

The protein resides in the cytoplasm. It catalyses the reaction malonyl-[ACP] + acetyl-CoA + H(+) = 3-oxobutanoyl-[ACP] + CO2 + CoA. Its pathway is lipid metabolism; fatty acid biosynthesis. In terms of biological role, catalyzes the condensation reaction of fatty acid synthesis by the addition to an acyl acceptor of two carbons from malonyl-ACP. Catalyzes the first condensation reaction which initiates fatty acid synthesis and may therefore play a role in governing the total rate of fatty acid production. Possesses both acetoacetyl-ACP synthase and acetyl transacylase activities. Its substrate specificity determines the biosynthesis of branched-chain and/or straight-chain of fatty acids. This chain is Beta-ketoacyl-[acyl-carrier-protein] synthase III, found in Ehrlichia chaffeensis (strain ATCC CRL-10679 / Arkansas).